The following is a 135-amino-acid chain: Large ribosomal subunit protein uL16c (135 aa).

The protein belongs to the universal ribosomal protein uL16 family. As to quaternary structure, part of the 50S ribosomal subunit.

Its subcellular location is the plastid. The protein localises to the chloroplast. This chain is Large ribosomal subunit protein uL16c, found in Olimarabidopsis pumila (Dwarf rocket).